We begin with the raw amino-acid sequence, 275 residues long: Tumor necrosis factor-inducible gene 6 protein (275 aa).

An N-terminal signal peptide occupies residues 1–17; that stretch reads MVVLLCLCVLLWEEAHG. The Link domain occupies 36–129; the sequence is GVYHREARAG…SERWDAYCYN (94 aa). Disulfide bonds link Cys58–Cys127, Cys82–Cys103, and Cys135–Cys161. The N-linked (GlcNAc...) asparagine glycan is linked to Asn118. A CUB domain is found at 135–247; that stretch reads CGGVFTDPKR…GGFQIKYVTV (113 aa). Residues Glu183, Asp191, Asp232, Ser234, and Val235 each contribute to the Ca(2+) site. Cys188 and Cys210 are oxidised to a cystine. Positions 253–264 are enriched in polar residues; the sequence is SSQAKNTSTTGN. Residues 253 to 275 are disordered; that stretch reads SSQAKNTSTTGNKKFLPGRFSHL. N-linked (GlcNAc...) asparagine glycosylation occurs at Asn258.

In terms of assembly, interacts (via Link domain) with inter-alpha-inhibitor (I-alpha-I) component bikunin. Interacts with ITIH2/HC2; this interaction is required for transesterification of the HC to hyaluronan. Interacts (via Link and CUB domains) with ITIH1. Chondroitin sulfate may be required for the stability of the complex. Interacts (via Link domain) with various C-X-C and C-C chemokines including PF4, CXCL8, CXCL11, CXCL12, CCL2, CCL7, CCL19, CCL21, and CCL27; this interaction interferes with chemokine binding to glycosaminoglycans. Interacts (primarily via Link domain) with BMP2; this interaction is inhibited by hyaluronan. Interacts (via both Link and CUB domains) with TNFSF11. Interacts (via CUB domain) with FN1 (via type III repeats 9-14); this interaction enhances fibronectin fibril assembly. TNFAIP6 may act as a bridging molecule between FN1 and THBS1. Expressed in epiphyseal and metaphyseal bone marrow of both the femur and tibia (at protein level).

It localises to the secreted. In terms of biological role, major regulator of extracellular matrix organization during tissue remodeling. Catalyzes the transfer of a heavy chain (HC) from inter-alpha-inhibitor (I-alpha-I) complex to hyaluronan. Cleaves the ester bond between the C-terminus of the HC and GalNAc residue of the chondroitin sulfate chain in I-alpha-I complex followed by transesterification of the HC to hyaluronan. In the process, potentiates the antiprotease function of I-alpha-I complex through release of free bikunin. Acts as a catalyst in the formation of hyaluronan-HC oligomers and hyaluronan-rich matrix surrounding the cumulus cell-oocyte complex, a necessary step for oocyte fertilization. Assembles hyaluronan in pericellular matrices that serve as platforms for receptor clustering and signaling. Enables binding of hyaluronan deposited on the surface of macrophages to LYVE1 on lymphatic endothelium and facilitates macrophage extravasation. Alters hyaluronan binding to functionally latent CD44 on vascular endothelium, switching CD44 into an active state that supports leukocyte rolling. Modulates the interaction of chemokines with extracellular matrix components and proteoglycans on endothelial cell surface, likely preventing chemokine gradient formation. In a negative feedback mechanism, may limit excessive neutrophil recruitment at inflammatory sites by antagonizing the association of CXCL8 with glycosaminoglycans on vascular endothelium. Has a role in osteogenesis and bone remodeling. Inhibits BMP2-dependent differentiation of mesenchymal stem cell to osteoblasts. Protects against bone erosion during inflammation by inhibiting TNFSF11/RANKL-dependent osteoclast activation. This Mus musculus (Mouse) protein is Tumor necrosis factor-inducible gene 6 protein (Tnfaip6).